The chain runs to 38 residues: GFGCPWNRYQCHSHCRSIGRLGGYCAGSLRLTCTCYRS.

3 cysteine pairs are disulfide-bonded: cysteine 4/cysteine 25, cysteine 11/cysteine 33, and cysteine 15/cysteine 35.

The protein resides in the secreted. In terms of biological role, has antibacterial activity against the Gram-positive bacteria L.lactis and S.aureus, and against the Gram-negative bacteria E.coli D32 and V.parahemolyticus. The sequence is that of Defensin-1 from Crassostrea virginica (Eastern oyster).